The sequence spans 235 residues: Orotidine 5'-phosphate decarboxylase (235 aa).

Substrate is bound by residues Asp-12, Lys-34, 61–70 (DMKLLDIDNT), Thr-116, Arg-177, Gln-186, and Arg-207. Catalysis depends on Lys-63, which acts as the Proton donor.

It belongs to the OMP decarboxylase family. Type 1 subfamily. In terms of assembly, homodimer.

It catalyses the reaction orotidine 5'-phosphate + H(+) = UMP + CO2. It participates in pyrimidine metabolism; UMP biosynthesis via de novo pathway; UMP from orotate: step 2/2. Functionally, catalyzes the decarboxylation of orotidine 5'-monophosphate (OMP) to uridine 5'-monophosphate (UMP). The polypeptide is Orotidine 5'-phosphate decarboxylase (Agrobacterium fabrum (strain C58 / ATCC 33970) (Agrobacterium tumefaciens (strain C58))).